Consider the following 347-residue polypeptide: Palmitoyltransferase ZDHHC19 (347 aa).

Helical transmembrane passes span 29-49 and 59-79; these read VFAA…FGFP and WAFP…LVSL. Residues 112–162 enclose the DHHC domain; that stretch reads EWCPKCLFHRPPRTYHCPWCNICVEDFDHHCKWVNNCIGHRNFRLFMLLVL. The active-site S-palmitoyl cysteine intermediate is C142. Helical transmembrane passes span 156–176 and 194–214; these read LFML…VTCL and AILV…LLLI. The disordered stretch occupies residues 275–347; the sequence is IQEKTKPSPP…PTAEPAAGDP (73 aa).

It belongs to the DHHC palmitoyltransferase family.

The protein localises to the golgi apparatus membrane. It is found in the cytoplasm. It localises to the perinuclear region. The catalysed reaction is L-cysteinyl-[protein] + hexadecanoyl-CoA = S-hexadecanoyl-L-cysteinyl-[protein] + CoA. In terms of biological role, palmitoyltransferase that mediates palmitoylation oproteins, such as RRAS and SQSTM1. Catalyzes palmitoylation of RRAS, leading to increased cell viability. Acts as a positive regulator of autophagy by mediating palmitoylation of SQSTM1, promoting affinity between SQSTM1 and ATG8 proteins and recruitment of ubiquitinated cargo proteins to autophagosomes. The sequence is that of Palmitoyltransferase ZDHHC19 (Zdhhc19) from Mus musculus (Mouse).